Reading from the N-terminus, the 488-residue chain is Regulatory protein ViaA (488 aa).

This sequence belongs to the ViaA family. In terms of assembly, homodimer. Interacts with RavA.

It localises to the cytoplasm. Its function is as follows. Component of the RavA-ViaA chaperone complex, which may act on the membrane to optimize the function of some of the respiratory chains. ViaA stimulates the ATPase activity of RavA. The sequence is that of Regulatory protein ViaA from Yersinia pseudotuberculosis serotype O:1b (strain IP 31758).